The sequence spans 49 residues: MINYVNITCIIFSTRTLLVFDTSLYIPPFMLSFIGYSLSNQNSPLFLYH.

The helical transmembrane segment at 17-39 threads the bilayer; that stretch reads LLVFDTSLYIPPFMLSFIGYSLS.

The protein resides in the membrane. This is an uncharacterized protein from Saccharomyces cerevisiae (strain ATCC 204508 / S288c) (Baker's yeast).